The following is a 433-amino-acid chain: Gamma-glutamyl phosphate reductase 1 (433 aa).

Belongs to the gamma-glutamyl phosphate reductase family.

It localises to the cytoplasm. It catalyses the reaction L-glutamate 5-semialdehyde + phosphate + NADP(+) = L-glutamyl 5-phosphate + NADPH + H(+). It functions in the pathway amino-acid biosynthesis; L-proline biosynthesis; L-glutamate 5-semialdehyde from L-glutamate: step 2/2. Catalyzes the NADPH-dependent reduction of L-glutamate 5-phosphate into L-glutamate 5-semialdehyde and phosphate. The product spontaneously undergoes cyclization to form 1-pyrroline-5-carboxylate. In Synechocystis sp. (strain ATCC 27184 / PCC 6803 / Kazusa), this protein is Gamma-glutamyl phosphate reductase 1.